The sequence spans 216 residues: Protein-L-isoaspartate O-methyltransferase (216 aa).

S60 is a catalytic residue.

Belongs to the methyltransferase superfamily. L-isoaspartyl/D-aspartyl protein methyltransferase family.

Its subcellular location is the cytoplasm. The enzyme catalyses [protein]-L-isoaspartate + S-adenosyl-L-methionine = [protein]-L-isoaspartate alpha-methyl ester + S-adenosyl-L-homocysteine. In terms of biological role, catalyzes the methyl esterification of L-isoaspartyl residues in peptides and proteins that result from spontaneous decomposition of normal L-aspartyl and L-asparaginyl residues. It plays a role in the repair and/or degradation of damaged proteins. This is Protein-L-isoaspartate O-methyltransferase from Methanococcus aeolicus (strain ATCC BAA-1280 / DSM 17508 / OCM 812 / Nankai-3).